The following is a 284-amino-acid chain: 2-dehydro-3-deoxyphosphooctonate aldolase (284 aa).

Belongs to the KdsA family.

Its subcellular location is the cytoplasm. The enzyme catalyses D-arabinose 5-phosphate + phosphoenolpyruvate + H2O = 3-deoxy-alpha-D-manno-2-octulosonate-8-phosphate + phosphate. It participates in carbohydrate biosynthesis; 3-deoxy-D-manno-octulosonate biosynthesis; 3-deoxy-D-manno-octulosonate from D-ribulose 5-phosphate: step 2/3. The protein operates within bacterial outer membrane biogenesis; lipopolysaccharide biosynthesis. The polypeptide is 2-dehydro-3-deoxyphosphooctonate aldolase (Shigella boydii serotype 18 (strain CDC 3083-94 / BS512)).